The chain runs to 1397 residues: DNA-directed RNA polymerase subunit beta (1397 aa).

Belongs to the RNA polymerase beta chain family. In terms of assembly, the RNAP catalytic core consists of 2 alpha, 1 beta, 1 beta' and 1 omega subunit. When a sigma factor is associated with the core the holoenzyme is formed, which can initiate transcription.

The catalysed reaction is RNA(n) + a ribonucleoside 5'-triphosphate = RNA(n+1) + diphosphate. In terms of biological role, DNA-dependent RNA polymerase catalyzes the transcription of DNA into RNA using the four ribonucleoside triphosphates as substrates. The protein is DNA-directed RNA polymerase subunit beta of Rhodospirillum centenum (strain ATCC 51521 / SW).